A 1125-amino-acid chain; its full sequence is Protein efr-3 (1125 aa).

Disordered regions lie at residues 240–261 (RTSN…PNPI), 471–493 (RPSR…NGAA), 788–819 (TSPP…KDET), and 845–1093 (QAGS…LGEK). Polar residues predominate over residues 242–252 (SNATAQPSETT). Positions 788-798 (TSPPTSPTTSP) are enriched in low complexity. Polar residues predominate over residues 845–854 (QAGSSQTASL). A compositionally biased stretch (low complexity) spans 855 to 877 (NGTNGTHRNTVNNNNRLGVNGVT). 3 stretches are compositionally biased toward polar residues: residues 878–896 (SPNG…TGPN), 975–1011 (LSFN…TQQL), and 1046–1071 (SRTT…TSSK).

Belongs to the EFR3 family.

In Neurospora crassa (strain ATCC 24698 / 74-OR23-1A / CBS 708.71 / DSM 1257 / FGSC 987), this protein is Protein efr-3 (efr-3).